The primary structure comprises 350 residues: LIM domain-containing protein unc-95 (350 aa).

The segment covering Met1–Gly37 has biased composition (polar residues). Positions Met1–Val65 are disordered. The span at Pro45–Val65 shows a compositional bias: basic and acidic residues. Residues Leu83 to Gln110 are a coiled coil. 3 disordered regions span residues Arg177 to Tyr198, Pro206 to Asp225, and Met235 to Pro262. An LIM zinc-binding domain is found at Ala268–Gly334.

In terms of processing, ubiquitinated. Ubiquitination by rnf-5 leads to dissociation from muscle dense bodies during molting and is required for ecdysis. As to expression, expressed in the body wall muscles, vulval muscles and the anal muscles. Expressed in the muscle arms of the head muscle cells that form neuromuscular junctions and in the anal depressor muscle.

The protein resides in the cytoplasm. It is found in the nucleus. It localises to the cell membrane. The protein localises to the myofibril. Its subcellular location is the sarcomere. The protein resides in the m line. It is found in the cell junction. It localises to the focal adhesion. Its function is as follows. Required for the assembly and integrity of muscle dense bodies, which establish the adhesion sites of the muscle cells to the extracellular matrix. Decreased localization of unc-95 to dense bodies and their subsequent dissociation plays an important role in ecdysis during molting. Involved in the organization of the muscle sarcomeric structure and thereby required for locomotion. The polypeptide is LIM domain-containing protein unc-95 (Caenorhabditis elegans).